Here is a 483-residue protein sequence, read N- to C-terminus: UDP-N-acetylmuramoyl-L-alanyl-D-glutamate--2,6-diaminopimelate ligase 2 (483 aa).

A UDP-N-acetyl-alpha-D-muramoyl-L-alanyl-D-glutamate-binding site is contributed by serine 30. 111-117 (GTNGKTT) serves as a coordination point for ATP. UDP-N-acetyl-alpha-D-muramoyl-L-alanyl-D-glutamate-binding positions include 156–157 (TT), threonine 183, and arginine 191. At lysine 223 the chain carries N6-carboxylysine. Meso-2,6-diaminopimelate-binding positions include arginine 380, 404–407 (DNPR), glycine 456, and glutamate 460. A Meso-diaminopimelate recognition motif motif is present at residues 404 to 407 (DNPR).

It belongs to the MurCDEF family. MurE subfamily. Mg(2+) serves as cofactor. Post-translationally, carboxylation is probably crucial for Mg(2+) binding and, consequently, for the gamma-phosphate positioning of ATP.

The protein localises to the cytoplasm. It catalyses the reaction UDP-N-acetyl-alpha-D-muramoyl-L-alanyl-D-glutamate + meso-2,6-diaminopimelate + ATP = UDP-N-acetyl-alpha-D-muramoyl-L-alanyl-gamma-D-glutamyl-meso-2,6-diaminopimelate + ADP + phosphate + H(+). Its pathway is cell wall biogenesis; peptidoglycan biosynthesis. Catalyzes the addition of meso-diaminopimelic acid to the nucleotide precursor UDP-N-acetylmuramoyl-L-alanyl-D-glutamate (UMAG) in the biosynthesis of bacterial cell-wall peptidoglycan. This chain is UDP-N-acetylmuramoyl-L-alanyl-D-glutamate--2,6-diaminopimelate ligase 2, found in Clostridium acetobutylicum (strain ATCC 824 / DSM 792 / JCM 1419 / IAM 19013 / LMG 5710 / NBRC 13948 / NRRL B-527 / VKM B-1787 / 2291 / W).